The following is a 349-amino-acid chain: Selenide, water dikinase (349 aa).

Cysteine 17 is a catalytic residue. Residues lysine 20 and 48 to 50 (YFD) each bind ATP. Mg(2+) is bound at residue aspartate 51. Residues aspartate 68, aspartate 91, and 139–141 (GHS) contribute to the ATP site. Mg(2+) is bound at residue aspartate 91. Residue aspartate 229 coordinates Mg(2+).

The protein belongs to the selenophosphate synthase 1 family. Class I subfamily. Homodimer. It depends on Mg(2+) as a cofactor.

The enzyme catalyses hydrogenselenide + ATP + H2O = selenophosphate + AMP + phosphate + 2 H(+). Synthesizes selenophosphate from selenide and ATP. This Nitrosomonas eutropha (strain DSM 101675 / C91 / Nm57) protein is Selenide, water dikinase.